A 1201-amino-acid chain; its full sequence is HEAT repeat-containing protein 6 (1201 aa).

The segment at 1–25 is disordered; that stretch reads MAGKVTFLGSNSSFSPDGKTQGFKS. The stretch at 182 to 221 is one HEAT 1 repeat; it reads PDLLGPSGVLVKYGDPKQPDIELRRSAVHCIANLCLSVPS. Positions 321–390 are disordered; it reads AVKPEPAQDT…SQSSMLTSPS (70 aa). Residues 341–352 show a composition bias toward basic residues; sequence QKKRKSRGKGKK. The span at 375 to 390 shows a compositional bias: polar residues; the sequence is SGWSHGSQSSMLTSPS. HEAT repeat units lie at residues 460–498, 523–560, and 566–603; these read GIGG…GSRQ, SIRE…NVPY, and GLLS…TQAP. A compositionally biased stretch (polar residues) spans 618-633; that stretch reads SSLGSGISTPQESPLS. A disordered region spans residues 618–653; it reads SSLGSGISTPQESPLSWRQPARRDEEASSPAAAEGP.

This chain is HEAT repeat-containing protein 6 (heatr6), found in Danio rerio (Zebrafish).